The chain runs to 217 residues: Chorionic somatomammotropin hormone 2 (217 aa).

A signal peptide spans 1-26 (MAAGSRTSLLLAFALLCLPWLQEAGA). His44 is a Zn(2+) binding site. Cys79 and Cys191 are oxidised to a cystine. A Zn(2+)-binding site is contributed by Glu200. The cysteines at positions 208 and 215 are disulfide-linked.

Belongs to the somatotropin/prolactin family. As to quaternary structure, can be found in a monomeric as well as dimeric form.

It localises to the secreted. In terms of biological role, produced only during pregnancy and is involved in stimulating lactation, fetal growth and metabolism. Does not interact with GHR but only activates PRLR through zinc-induced dimerization. The chain is Chorionic somatomammotropin hormone 2 (CSH2) from Homo sapiens (Human).